Reading from the N-terminus, the 66-residue chain is Phylloseptin-B1 (66 aa).

A signal peptide spans 1–22 (MAFLKKSLFLVLFLGLVSLSIC). Positions 23-46 (EEEKRETEEKEYDQGEDDKSEEKR) are excised as a propeptide. L65 is modified (leucine amide).

It belongs to the frog skin active peptide (FSAP) family. Phylloseptin subfamily. In terms of tissue distribution, expressed by the skin glands.

It is found in the secreted. Its subcellular location is the target cell membrane. Antimicrobial peptide with activity against only a few strains of Gram-positive bacteria (S.aureus and B.megaterium). Acts in a synergistic effect in combination with Plasticin-B1 at doses that are not active alone. This Phyllomedusa bicolor (Two-colored leaf frog) protein is Phylloseptin-B1.